Consider the following 282-residue polypeptide: Dihydropteroate synthase (282 aa).

The Pterin-binding domain occupies proline 15–arginine 267. Mg(2+) is bound at residue asparagine 22. (7,8-dihydropterin-6-yl)methyl diphosphate is bound by residues threonine 62, aspartate 96, asparagine 115, aspartate 185, lysine 221, and arginine 255–histidine 257.

Belongs to the DHPS family. In terms of assembly, homodimer. Mg(2+) is required as a cofactor.

It catalyses the reaction (7,8-dihydropterin-6-yl)methyl diphosphate + 4-aminobenzoate = 7,8-dihydropteroate + diphosphate. It functions in the pathway cofactor biosynthesis; tetrahydrofolate biosynthesis; 7,8-dihydrofolate from 2-amino-4-hydroxy-6-hydroxymethyl-7,8-dihydropteridine diphosphate and 4-aminobenzoate: step 1/2. Catalyzes the condensation of para-aminobenzoate (pABA) with 6-hydroxymethyl-7,8-dihydropterin diphosphate (DHPt-PP) to form 7,8-dihydropteroate (H2Pte), the immediate precursor of folate derivatives. The protein is Dihydropteroate synthase (folP) of Shigella flexneri.